Here is a 517-residue protein sequence, read N- to C-terminus: Crotonobetaine/carnitine--CoA ligase (517 aa).

It belongs to the ATP-dependent AMP-binding enzyme family.

It catalyses the reaction 4-(trimethylamino)butanoate + ATP + CoA = 4-(trimethylamino)butanoyl-CoA + AMP + diphosphate. It carries out the reaction crotonobetaine + ATP + CoA = crotonobetainyl-CoA + AMP + diphosphate. The catalysed reaction is (R)-carnitine + ATP + CoA = (R)-carnitinyl-CoA + AMP + diphosphate. It participates in amine and polyamine metabolism; carnitine metabolism. In terms of biological role, catalyzes the transfer of CoA to carnitine, generating the initial carnitinyl-CoA needed for the CaiB reaction cycle. Also has activity toward crotonobetaine and gamma-butyrobetaine. The protein is Crotonobetaine/carnitine--CoA ligase of Shigella dysenteriae serotype 1 (strain Sd197).